A 311-amino-acid chain; its full sequence is R2-like ligand binding oxidase (311 aa).

Residues Glu68, Glu101, and His104 each coordinate Mn(2+). The segment at residues Val71–Tyr162 is a cross-link (3-(O4'-tyrosyl)-valine (Val-Tyr)). Glu101 is a Fe cation binding site. Residues Glu167, Glu202, and His205 each coordinate Fe cation.

It belongs to the ribonucleoside diphosphate reductase small chain family. R2-like ligand binding oxidase subfamily. Homodimer. Requires Fe cation as cofactor. Mn(2+) is required as a cofactor.

In terms of biological role, probable oxidase that might be involved in lipid metabolism. In Mycolicibacterium paratuberculosis (strain ATCC BAA-968 / K-10) (Mycobacterium paratuberculosis), this protein is R2-like ligand binding oxidase.